Here is a 74-residue protein sequence, read N- to C-terminus: ATP synthase subunit 9, mitochondrial (74 aa).

2 helical membrane-spanning segments follow: residues 8–28 (MGAG…GNVF) and 50–70 (ILGF…AFLI).

This sequence belongs to the ATPase C chain family. As to quaternary structure, F-type ATPases have 2 components, CF(1) - the catalytic core - and CF(0) - the membrane proton channel. CF(1) has five subunits: alpha(3), beta(3), gamma(1), delta(1), epsilon(1). CF(0) has three main subunits: a, b and c.

The protein localises to the mitochondrion membrane. Its function is as follows. This protein is one of the chains of the nonenzymatic membrane component (F0) of mitochondrial ATPase. The sequence is that of ATP synthase subunit 9, mitochondrial (ATP9) from Solanum lycopersicum (Tomato).